The chain runs to 164 residues: C-phycoerythrin class 1 subunit alpha (164 aa).

Residues Cys82 and Cys139 each contribute to the (2R,3E)-phycoerythrobilin site.

Belongs to the phycobiliprotein family. As to quaternary structure, heterodimer of an alpha and a beta chain. Post-translationally, contains one covalently linked bilin chromophore.

The protein localises to the cellular thylakoid membrane. Functionally, light-harvesting photosynthetic bile pigment-protein from the phycobiliprotein complex. The chain is C-phycoerythrin class 1 subunit alpha (cpeA) from Synechococcus sp. (strain WH7803).